Here is a 554-residue protein sequence, read N- to C-terminus: Neutral amino acid transporter 9 (554 aa).

The Cytoplasmic segment spans residues 1 to 112; it reads MDSDQTPLIN…GSDGTGKNSS (112 aa). Residues 113–133 form a helical membrane-spanning segment; that stretch reads IVTIFMIWNTMMGTSILSIPW. The segment at 122–127 is important for arginine binding and amino acid transport; it reads TMMGTS. Position 127 (serine 127) interacts with arginine. Residues 134-139 are Lumenal-facing; the sequence is GIKQAG. The helical transmembrane segment at 140-160 threads the bilayer; that stretch reads FTTGVCILFLMGILTLYCCYR. Over 161 to 191 the chain is Cytoplasmic; that stretch reads VVKSRGTIPLTDTSNWEFPDVCQYYFGSFGR. Residues 192-218 form a helical membrane-spanning segment; it reads WSSLLFSLVSLIGAMIVYWVLMSNFLF. Residues 219–276 lie on the Lumenal side of the membrane; the sequence is NTGKFIYNYVNDVNVTDDVLSNNGSDKVICPNPDSTRPLNKSMDTYFGNGTNYEQFET. N-linked (GlcNAc...) asparagine glycosylation is found at asparagine 232, asparagine 241, asparagine 258, and asparagine 267. Cysteines 248 and 417 form a disulfide. Residues 277 to 293 traverse the membrane as a helical segment; the sequence is WWSKTNTVPFYLVVLLL. Over 294-302 the chain is Cytoplasmic; sequence PLLSFRSPS. A helical transmembrane segment spans residues 303-327; that stretch reads FFAKFNILGTVSIIYLVSLVTLKAA. The Lumenal segment spans residues 328 to 349; the sequence is HLGFHLRFSWNQVQEFFVPEFR. A helical transmembrane segment spans residues 350–370; that stretch reads LSFPQLTGILTLAFFIHNCII. Residues 371 to 387 are Cytoplasmic-facing; the sequence is TLLKNNRNQKNNVRDLS. A helical membrane pass occupies residues 388 to 408; sequence IAYLLVGLTYIYVGVAVFASF. The Lumenal portion of the chain corresponds to 409 to 430; sequence PSPPLSKQCIQQNFLDNFPSSD. Residues 431–451 traverse the membrane as a helical segment; that stretch reads ILAFVARIFLLFQMMTVYPLL. The CARC motif signature appears at 437 to 447; sequence RIFLLFQMMTV. Residues 450-456 carry the CRAC motif motif; that stretch reads LLGYLVR. Topologically, residues 452-472 are cytoplasmic; sequence GYLVRVQLLGHIFGDIYPSVF. The helical transmembrane segment at 473–493 threads the bilayer; that stretch reads HVLALNIAVVGVGVIMARFYP. At 494-500 the chain is on the lumenal side; the sequence is NIGGIIR. The chain crosses the membrane as a helical span at residues 501–521; it reads FSGAACGLAFVFVYPSLIHMI. Residues 522–533 are Cytoplasmic-facing; the sequence is SLHRRGQLKVHS. Residues 534-554 traverse the membrane as a helical segment; it reads ILIHVSIIVLGIANLIAQFFM.

The protein belongs to the amino acid/polyamine transporter 2 family. SLC38A9 subfamily. In terms of assembly, associated component of the Ragulator complex. Associated component of the Rag GTPases heterodimers. In terms of processing, glycosylated.

It is found in the lysosome membrane. Its subcellular location is the late endosome membrane. The catalysed reaction is L-leucine(in) = L-leucine(out). It carries out the reaction L-tyrosine(in) = L-tyrosine(out). It catalyses the reaction L-glutamine(out) = L-glutamine(in). The enzyme catalyses L-asparagine(out) = L-asparagine(in). In terms of biological role, lysosomal amino acid transporter involved in the activation of mTORC1 in response to amino acid levels. Probably acts as an amino acid sensor of the Rag GTPases and Ragulator complexes, 2 complexes involved in amino acid sensing and activation of mTORC1, a signaling complex promoting cell growth in response to growth factors, energy levels, and amino acids. Following activation by amino acids, the Ragulator and Rag GTPases function as a scaffold recruiting mTORC1 to lysosomes where it is in turn activated. SLC38A9 mediates transport of amino acids with low capacity and specificity with a slight preference for polar amino acids. Acts as an arginine sensor. Following activation by arginine binding, mediates transport of L-glutamine, leucine and tyrosine with high efficiency, and is required for the efficient utilization of these amino acids after lysosomal protein degradation. However, the transport mechanism is not well defined and the role of sodium is not clear. Guanine exchange factor (GEF) that, upon arginine binding, stimulates GDP release from RRAGA and therefore activates the Rag GTPase heterodimer and the mTORC1 pathway in response to nutrient sufficiency. The polypeptide is Neutral amino acid transporter 9 (Xenopus tropicalis (Western clawed frog)).